Here is a 331-residue protein sequence, read N- to C-terminus: Probable serine hydrolase (331 aa).

Positions 1–28 (MGQTRVAATTAAQSPAAELSPETNGQTE) are disordered. Positions 7–17 (AATTAAQSPAA) are enriched in low complexity. Residues 63-163 (PIIALHGWQD…EVEKLINIDI (101 aa)) form the AB hydrolase-1 domain. Ser138 is a catalytic residue.

Belongs to the AB hydrolase superfamily. As to expression, ubiquitously expressed before embryonic stage 11. At stage 11, expression is concentrated in the foregut and posterior midgut. By stage 15, in gastric caeca, pharynx, posterior spiracles and anterior edge of midgut. At the end of embryogenesis, expression is confined to gastric caeca. During third instar larvae, expressed at low levels in gastric caeca, midgut and hindgut and high level in fat body.

In terms of biological role, may have a role in detoxification and digestion during embryogenesis and larval development. The polypeptide is Probable serine hydrolase (kraken) (Drosophila melanogaster (Fruit fly)).